The primary structure comprises 357 residues: Neurogenic differentiation factor 1 (357 aa).

The tract at residues 1–94 (MTKSYSESGL…GPKKKKMTKA (94 aa)) is disordered. Residues 58-78 (EEEDEDEDLEEEEEEEEEEDD) are compositionally biased toward acidic residues. A compositionally biased stretch (basic residues) spans 81–93 (PKRRGPKKKKMTK). The Nuclear localization signal signature appears at 87–93 (KKKKMTK). Residues 101-153 (LRRMKANARERNRMHGLNAALDNLRKVVPCYSKTQKLSKIETLRLAKNYIWAL) form the bHLH domain. Phosphoserine occurs at positions 162, 259, 266, and 274. S336 carries the phosphoserine; by CaMK2 modification.

As to quaternary structure, efficient DNA-binding requires dimerization with another bHLH protein. Heterodimer with TCF3/E47; the heterodimer is inhibited in presence of ID2, but not NR0B2, to E-box element. Interacts with EP300; the interaction is inhibited by NR0B2. Interacts with RREB1. Interacts with ATOH8. In terms of processing, phosphorylated by MAPK1; phosphorylation regulates heterodimerization and DNA-binding activities. Phosphorylation on Ser-266 and Ser-274 increases transactivation on the insulin promoter in glucose-stimulated insulinoma cells. Phosphorylated. In islet cells, phosphorylated on Ser-274 upon glucose stimulation; which may be required for nuclear localization. In activated neurons, phosphorylated on Ser-336 by CaMK2; which promotes dendritic growth.

The protein localises to the cytoplasm. It localises to the nucleus. Functionally, acts as a transcriptional activator: mediates transcriptional activation by binding to E box-containing promoter consensus core sequences 5'-CANNTG-3'. Associates with the p300/CBP transcription coactivator complex to stimulate transcription of the secretin gene as well as the gene encoding the cyclin-dependent kinase inhibitor CDKN1A. Contributes to the regulation of several cell differentiation pathways, like those that promote the formation of early retinal ganglion cells, inner ear sensory neurons, granule cells forming either the cerebellum or the dentate gyrus cell layer of the hippocampus, endocrine islet cells of the pancreas and enteroendocrine cells of the small intestine. Together with PAX6 or SIX3, is required for the regulation of amacrine cell fate specification. Also required for dendrite morphogenesis and maintenance in the cerebellar cortex. Associates with chromatin to enhancer regulatory elements in genes encoding key transcriptional regulators of neurogenesis. In Rattus norvegicus (Rat), this protein is Neurogenic differentiation factor 1 (Neurod1).